Consider the following 138-residue polypeptide: NADH-quinone oxidoreductase subunit A (138 aa).

3 consecutive transmembrane segments (helical) span residues 8–28 (FGAV…GYLT), 63–83 (FYVV…LFPW), and 93–113 (FALI…AYAW).

Belongs to the complex I subunit 3 family. NDH-1 is composed of 14 different subunits. Subunits NuoA, H, J, K, L, M, N constitute the membrane sector of the complex.

It is found in the cell inner membrane. It carries out the reaction a quinone + NADH + 5 H(+)(in) = a quinol + NAD(+) + 4 H(+)(out). In terms of biological role, NDH-1 shuttles electrons from NADH, via FMN and iron-sulfur (Fe-S) centers, to quinones in the respiratory chain. The immediate electron acceptor for the enzyme in this species is believed to be a menaquinone. Couples the redox reaction to proton translocation (for every two electrons transferred, four hydrogen ions are translocated across the cytoplasmic membrane), and thus conserves the redox energy in a proton gradient. In Prosthecochloris aestuarii (strain DSM 271 / SK 413), this protein is NADH-quinone oxidoreductase subunit A.